A 189-amino-acid polypeptide reads, in one-letter code: Peptidyl-tRNA hydrolase (189 aa).

Tyr-14 is a tRNA binding site. The Proton acceptor role is filled by His-19. The tRNA site is built by Phe-64, Asn-66, and Asn-112.

Belongs to the PTH family. In terms of assembly, monomer.

The protein resides in the cytoplasm. It catalyses the reaction an N-acyl-L-alpha-aminoacyl-tRNA + H2O = an N-acyl-L-amino acid + a tRNA + H(+). Hydrolyzes ribosome-free peptidyl-tRNAs (with 1 or more amino acids incorporated), which drop off the ribosome during protein synthesis, or as a result of ribosome stalling. Its function is as follows. Catalyzes the release of premature peptidyl moieties from peptidyl-tRNA molecules trapped in stalled 50S ribosomal subunits, and thus maintains levels of free tRNAs and 50S ribosomes. This Rhizorhabdus wittichii (strain DSM 6014 / CCUG 31198 / JCM 15750 / NBRC 105917 / EY 4224 / RW1) (Sphingomonas wittichii) protein is Peptidyl-tRNA hydrolase.